A 397-amino-acid polypeptide reads, in one-letter code: Decapping and exoribonuclease protein (397 aa).

Basic and acidic residues predominate over residues 1–20; the sequence is MESRGTKREAGKIEVAEPRN. A disordered region spans residues 1-37; the sequence is MESRGTKREAGKIEVAEPRNKLPRPAPSLPTDPALYS. Arginine 58 contributes to the substrate binding site. The tract at residues 67 to 88 is disordered; sequence LRYYSPPPTNGQSPNFDLRDGY. Residues glutamate 101 and 131 to 133 contribute to the substrate site; that span reads WRG. Glutamate 192 is a Mg(2+) binding site. Substrate contacts are provided by cysteine 217 and glutamate 234. Positions 234, 236, 253, and 254 each coordinate Mg(2+). The substrate site is built by lysine 255 and glutamine 280. A Phosphothreonine modification is found at threonine 392. Position 394 is a phosphoserine (serine 394).

Belongs to the DXO/Dom3Z family. It depends on Mg(2+) as a cofactor.

Its subcellular location is the nucleus. It carries out the reaction a 5'-end triphospho-ribonucleoside in mRNA + H2O = a 5'-end phospho-ribonucleoside in mRNA + diphosphate + H(+). The catalysed reaction is a 5'-end NAD(+)-phospho-ribonucleoside in mRNA + H2O = a 5'-end phospho-ribonucleoside in mRNA + NAD(+) + H(+). It catalyses the reaction a 5'-end NAD(+)-phospho-ribonucleoside in snoRNA + H2O = a 5'-end phospho-ribonucleoside in snoRNA + NAD(+) + H(+). The enzyme catalyses a 5'-end (N(7)-methyl 5'-triphosphoguanosine)-ribonucleoside-ribonucleotide in mRNA + H2O = a (N(7)-methyl 5'-triphosphoguanosine)-nucleoside + a 5'-end phospho-ribonucleoside in mRNA + H(+). It carries out the reaction a 5'-end FAD-phospho-ribonucleoside in mRNA + H2O = a 5'-end phospho-ribonucleoside in mRNA + FAD + H(+). The catalysed reaction is a 5'-end CoA-ribonucleoside in mRNA + H2O = 3'-dephospho-CoA + a 5'-end phospho-ribonucleoside in mRNA + H(+). Functionally, decapping enzyme for NAD-capped RNAs: specifically hydrolyzes the nicotinamide adenine dinucleotide (NAD) cap from a subset of RNAs by removing the entire NAD moiety from the 5'-end of an NAD-capped RNA. The NAD-cap is present at the 5'-end of some RNAs and snoRNAs. In contrast to the canonical 5'-end N7 methylguanosine (m7G) cap, the NAD cap promotes mRNA decay. Preferentially acts on NAD-capped transcripts in response to environmental stress. Also acts as a non-canonical decapping enzyme that removes the entire cap structure of m7G capped or incompletely capped RNAs and mediates their subsequent degradation. Specifically degrades pre-mRNAs with a defective 5'-end m7G cap and is part of a pre-mRNA capping quality control. Has decapping activity toward incomplete 5'-end m7G cap mRNAs such as unmethylated 5'-end-capped RNA (cap0), while it has no activity toward 2'-O-ribose methylated m7G cap (cap1). In contrast to canonical decapping enzymes DCP2 and NUDT16, which cleave the cap within the triphosphate linkage, the decapping activity releases the entire cap structure GpppN and a 5'-end monophosphate RNA. Also has 5'-3' exoribonuclease activities: The 5'-end monophosphate RNA is then degraded by the 5'-3' exoribonuclease activity, enabling this enzyme to decap and degrade incompletely capped mRNAs. Also possesses RNA 5'-pyrophosphohydrolase activity by hydrolyzing the 5'-end triphosphate to release pyrophosphates. Exhibits decapping activity towards FAD-capped RNAs. Exhibits decapping activity towards dpCoA-capped RNAs in vitro. The chain is Decapping and exoribonuclease protein from Bos taurus (Bovine).